Here is a 305-residue protein sequence, read N- to C-terminus: Aquaporin-1 (305 aa).

Positions 1–34 (MSSNDSNDTDKQHTRLDPTGVDDAYIPPEQPETK) are disordered. Residues 1–48 (MSSNDSNDTDKQHTRLDPTGVDDAYIPPEQPETKHHRFKISRDTLRDH) lie on the Cytoplasmic side of the membrane. The helical transmembrane segment at 49-69 (FIAAVGEFCGTFMFLWCAYVI) threads the bilayer. Residues 70–91 (CNVANHDVALVAAPDGSHPGQL) are Extracellular-facing. The helical transmembrane segment at 92-112 (IMIAIGFGFSVMFSIWCFAGV) threads the bilayer. Topologically, residues 113 to 136 (SGGALNPAMSLSLCLARAVSPTRC) are cytoplasmic. An NPA 1 motif is present at residues 118-120 (NPA). Residues 137-157 (VVMWVSQIVAGMAAGGAASAM) traverse the membrane as a helical segment. Residues 158-176 (TPGEVLFANSLGLGCSRTR) are Extracellular-facing. A helical membrane pass occupies residues 177–197 (GLFLEMFGTAILCLTVLMTAV). The Cytoplasmic portion of the chain corresponds to 198-203 (EKRETN). The chain crosses the membrane as a helical span at residues 204-224 (FMAALPIGISLFIAHVALTAY). Residues 225 to 248 (TGTGVNPARSLGAAVAARYFPHYH) are Extracellular-facing. The short motif at 230 to 232 (NPA) is the NPA 2 element. The helical transmembrane segment at 249–269 (WIYWIGTLLGSILAWSVWQLL) threads the bilayer. Over 270 to 305 (QILDYTTYVTAEKAASTKEKAQKKGETSSSSAVAEV) the chain is Cytoplasmic. The span at 286 to 295 (TKEKAQKKGE) shows a compositional bias: basic and acidic residues. Positions 286 to 305 (TKEKAQKKGETSSSSAVAEV) are disordered. A compositionally biased stretch (polar residues) spans 296 to 305 (TSSSSAVAEV).

This sequence belongs to the MIP/aquaporin (TC 1.A.8) family.

The protein resides in the endoplasmic reticulum membrane. Its subcellular location is the cell membrane. Water channel required to facilitate the transport of water across membranes. Involved in sporulation, freeze tolerance and osmotolerance. Is non-functional in most laboratory strains. The polypeptide is Aquaporin-1 (AQY1) (Saccharomyces cerevisiae (strain ATCC 204508 / S288c) (Baker's yeast)).